The following is a 286-amino-acid chain: ATP synthase gamma chain (286 aa).

Belongs to the ATPase gamma chain family. F-type ATPases have 2 components, CF(1) - the catalytic core - and CF(0) - the membrane proton channel. CF(1) has five subunits: alpha(3), beta(3), gamma(1), delta(1), epsilon(1). CF(0) has three main subunits: a, b and c.

Its subcellular location is the cell inner membrane. Produces ATP from ADP in the presence of a proton gradient across the membrane. The gamma chain is believed to be important in regulating ATPase activity and the flow of protons through the CF(0) complex. The polypeptide is ATP synthase gamma chain (Shewanella halifaxensis (strain HAW-EB4)).